A 381-amino-acid chain; its full sequence is Creatine kinase M-type (381 aa).

The Phosphagen kinase N-terminal domain maps to 11–98 (KLNFKAEEEY…FDPIIQDRHG (88 aa)). One can recognise a Phosphagen kinase C-terminal domain in the interval 125 to 367 (YVLSSRVRTG…KLMVEMEKKL (243 aa)). 128-132 (SSRVR) provides a ligand contact to ATP. Phosphoserine is present on Ser164. Thr166 is modified (phosphothreonine). Phosphoserine is present on Ser178. The residue at position 180 (Thr180) is a Phosphothreonine. His191 is a binding site for ATP. Ser199 bears the Phosphoserine mark. The ATP site is built by Arg236 and Arg292. Thr313 and Thr322 each carry phosphothreonine. ATP contacts are provided by residues 320–325 (RGTGGV) and Asp335. At Ser372 the chain carries Phosphoserine.

Belongs to the ATP:guanido phosphotransferase family. As to quaternary structure, dimer of identical or non-identical chains, which can be either B (brain type) or M (muscle type). With MM being the major form in skeletal muscle and myocardium, MB existing in myocardium, and BB existing in many tissues, especially brain.

It catalyses the reaction creatine + ATP = N-phosphocreatine + ADP + H(+). Reversibly catalyzes the transfer of phosphate between ATP and various phosphogens (e.g. creatine phosphate). Creatine kinase isoenzymes play a central role in energy transduction in tissues with large, fluctuating energy demands, such as skeletal muscle, heart, brain and spermatozoa. The polypeptide is Creatine kinase M-type (CKM) (Sus scrofa (Pig)).